The primary structure comprises 554 residues: Apyrase (554 aa).

Positions 1 to 21 are cleaved as a signal peptide; the sequence is MFKITVFIYVLQLILPSKVHS. Residues aspartate 43, histidine 45, aspartate 92, asparagine 124, histidine 224, and histidine 248 each coordinate a divalent metal cation. 6 residues coordinate AMP: arginine 358, asparagine 394, arginine 399, phenylalanine 418, phenylalanine 504, and aspartate 510.

It belongs to the 5'-nucleotidase family. It depends on a divalent metal cation as a cofactor. Salivary gland (at protein level).

It localises to the secreted. The catalysed reaction is a ribonucleoside 5'-triphosphate + 2 H2O = a ribonucleoside 5'-phosphate + 2 phosphate + 2 H(+). In terms of biological role, facilitates hematophagy by inhibiting ADP-dependent platelet aggregation in the host. Cleaves adenosine triphosphate (ATP) and adenosine diphosphate (ADP) to adenosine monophosphate (AMP) and inorganic phosphate. Shows potential for antithrombotic activity. Can induce basophil activation. May reduce probing time by facilitating the speed of locating blood. The protein is Apyrase of Tabanus yao (Horsefly).